We begin with the raw amino-acid sequence, 728 residues long: Catalase-peroxidase 1 (728 aa).

The N-terminal stretch at 1 to 22 (MDKTQSSQGKCPVMHGANSAVA) is a signal peptide. The segment at residues 97–225 (WHSAGTYRVA…LAAVMMGLIY (129 aa)) is a cross-link (tryptophyl-tyrosyl-methioninium (Trp-Tyr) (with M-251)). Residue H98 is the Proton acceptor of the active site. Positions 225–251 (YVNPEGVDGKPDPLRTAQDVRVTFARM) form a cross-link, tryptophyl-tyrosyl-methioninium (Tyr-Met) (with W-97). H266 is a binding site for heme b.

It belongs to the peroxidase family. Peroxidase/catalase subfamily. In terms of assembly, homodimer or homotetramer. Heme b is required as a cofactor. Formation of the three residue Trp-Tyr-Met cross-link is important for the catalase, but not the peroxidase activity of the enzyme.

The catalysed reaction is H2O2 + AH2 = A + 2 H2O. It catalyses the reaction 2 H2O2 = O2 + 2 H2O. Its function is as follows. Bifunctional enzyme with both catalase and broad-spectrum peroxidase activity. The polypeptide is Catalase-peroxidase 1 (Shewanella sp. (strain ANA-3)).